The primary structure comprises 811 residues: LPS-assembly protein LptD (811 aa).

A signal peptide spans 1–17; sequence MTEPNRARKTRQRTAFA. Residues 1–22 are disordered; that stretch reads MTEPNRARKTRQRTAFAAPDQR.

This sequence belongs to the LptD family. As to quaternary structure, component of the lipopolysaccharide transport and assembly complex. Interacts with LptE and LptA.

It is found in the cell outer membrane. Its function is as follows. Together with LptE, is involved in the assembly of lipopolysaccharide (LPS) at the surface of the outer membrane. The chain is LPS-assembly protein LptD from Ralstonia nicotianae (strain ATCC BAA-1114 / GMI1000) (Ralstonia solanacearum).